The following is a 351-amino-acid chain: UPF0252 protein MJECL39 (351 aa).

A run of 2 helical transmembrane segments spans residues 58-78 and 91-111; these read FITF…VWLW and IIIC…LCGV.

The protein belongs to the UPF0252 family.

It is found in the cell membrane. This chain is UPF0252 protein MJECL39, found in Methanocaldococcus jannaschii (strain ATCC 43067 / DSM 2661 / JAL-1 / JCM 10045 / NBRC 100440) (Methanococcus jannaschii).